A 63-amino-acid polypeptide reads, in one-letter code: Conotoxin LeDr243 (63 aa).

Positions 1-22 (MRCLPVFVILLLLIASTPSIDA) are cleaved as a signal peptide. The propeptide occupies 23-47 (RPKTKDDMPLASFNDNAKRILQILS). Cys-60 bears the Cysteine amide mark. The propeptide occupies 62-63 (LG).

This sequence belongs to the conotoxin T superfamily. Contains 2 disulfide bonds that can be either 'C1-C3, C2-C4' or 'C1-C4, C2-C3', since these disulfide connectivities have been observed for conotoxins with cysteine framework V (for examples, see AC P0DQQ7 and AC P81755). As to expression, expressed by the venom duct.

It localises to the secreted. In Conus litteratus (Lettered cone), this protein is Conotoxin LeDr243.